Reading from the N-terminus, the 310-residue chain is CCR4-NOT transcription complex subunit 7 (310 aa).

Positions 51, 53, 172, and 245 each coordinate a divalent metal cation.

Belongs to the CAF1 family. In terms of assembly, component of the CCR4-NOT complex at least composed of ccf-1, ccr-4 and let-711, which is required for germ cell development in hermaphrodites. Within the complex interacts with let-711. In terms of tissue distribution, highly expressed in the germline. In particular, highly expressed in germ cells that enter meiosis and progress through the pachytene stage.

The protein resides in the nucleus. The protein localises to the cytoplasm. It carries out the reaction Exonucleolytic cleavage of poly(A) to 5'-AMP.. Catalytic component of the CCR4-NOT complex which is one of the major cellular mRNA deadenylases and is linked to various cellular processes including bulk mRNA degradation, miRNA-mediated repression, translational repression during translational initiation and general transcription regulation. Within the complex, plays a role in miRNA-mediated deadenylation in embryos. Within the complex promotes germ cell development and fertility in hermaphrodites. Additional complex functions may be a consequence of its influence on mRNA expression. The chain is CCR4-NOT transcription complex subunit 7 from Caenorhabditis elegans.